A 171-amino-acid chain; its full sequence is Ribosome maturation factor RimP (171 aa).

Belongs to the RimP family.

It is found in the cytoplasm. Required for maturation of 30S ribosomal subunits. In Oleidesulfovibrio alaskensis (strain ATCC BAA-1058 / DSM 17464 / G20) (Desulfovibrio alaskensis), this protein is Ribosome maturation factor RimP.